The sequence spans 462 residues: MTIEATEGHVSKGMLAKGDSTSPIPTIFDVLSRDHVFVDSHQKVWWERTGQLLDKILASAGYNPARRLEALTFYIQVLIPFLGPHPHQFRSAITRSGLPLEFSVNYQQRGDIDPVVRIGFEPVAAASGTEIDPYNQIPVVDLLNQLEVLNIPAFDPSLFRYFLDAHTVNGHEKGLLKEKKIEGSELTSQSAFGFDLKEKAISVKGYTFPAIKCTLNEKGFGNFISESIQPLAAQMGPIPSFDMVHSYLEGTNGYSQFAFWSFDCVDPAQSRLKLYSSHNSVVWSKVEEIWTLGGRAKSPVVQEGLVYLKELWELTKLSEGHREFNGGFDDGKDATATPMVWNYEMKIGEAFPLTKFYFPIHGESDQNVIGGLAQFLSRIGLSKYGDNYEATVRHYLYDFSTSPVPCKNDSIANFDSPERDLSKTARLTSWISFAYTEKTGVYLSVYYHSSDEYPWLELEEIN.

Glutamate 101 lines the brevianamide F pocket. Residues arginine 117, lysine 204, tyrosine 206, lysine 273, tyrosine 275, tyrosine 357, tyrosine 442, and tyrosine 446 each coordinate dimethylallyl diphosphate.

It belongs to the tryptophan dimethylallyltransferase family.

It functions in the pathway alkaloid biosynthesis. Functionally, prenyltransferase; part of the gene cluster that mediates the biosynthesis of paraherquamide, a fungal indole alkaloid that belongs to a family of natural products containing a characteristic bicyclo[2.2.2]diazaoctane core. The first steps in the biosynthesis of paraherquamide is the production of the beta-methyl-proline precursor from L-isoleucine. They require oxidation of a terminally hydroxylated L-isoleucine to the corresponding aldehyde by enzymes which have still to be identified. Spontaneous cyclization and dehydration would yield the 4-methyl pyrolline-5-carboxylic acid, which is then reduced by the pyrroline-5-carboxylate reductase phqD leading to the beta-methyl-proline precursor. The next step of paraherquamide biosynthesis involves coupling of beta-methyl-proline and L-tryptophan by the bimodular NRPS phqB, to produce a monooxopiperazine intermediate. The reductase (R) domain of phqB utilizes NADPH for hydride transfer to reduce the thioester bond of the T domain-tethered linear dipeptide to a hemithioaminal intermediate, which spontaneously cleaves the C-S bond to release the aldehyde product. This compound undergoes spontaneous cyclization and dehydration to give a dienamine which is reverse prenylated at C-2 by the reverse prenyltransferase phqJ. The other prenyltransferase present in the cluster, phqI may be a redundant gene in the pathway. During biosynthetic assembly, the key step to produce the polycyclic core is catalyzed by the bifunctional reductase and intramolecular [4+2] Diels-Alderase, phqE, resulting in formation of the [2.2.2] diazaoctane intermediate preparaherquamide. Following formation of preparaherquamide, an indole 2,3-epoxidation-initiated pinacol-like rearrangement is catalyzed by the phqK FAD-dependent monooxygenase. The prenyltransferase phqA, the cytochrome P450 monooxygenase phqL, and the FAD-linked oxidoreductase phqH (or the cytochrome P450 monooxygenase phqM), are proposed to be involved in the formation of the pyran ring. The FAD-dependent monooxygenase phqK is likely responsible for generation of the spiro-oxindole, and the N-methylation is likely mediated by the phqN methyltransferase leading to the isolable natural product paraherquamide F. However, the order of these biosynthetic steps has still to be determined. In late-stage paraherquamide biosynthesis, the third P450 monooxygenase, phqO, is probably responsible for the C-14 hydroxylation, transforming paraherquamide F to paraherquamide G, and paraherquamide E to the final product paraherquamide A. The expansion from the 6-membered ring pyran (in paraherquamides F and G) to the 7-membered dioxepin ring (in paraherquamides A and E) represents a poorly understood but intriguing process that probably involves the 2-oxoglutarate-dependent dioxygenase phqC. Finally, the remaining members of the paraherquamide cluster, including phqI as well as phqM (or phqH), do not have a clearly prescribed role and appear to be redundant. The polypeptide is Prenyltransferase phqI (Penicillium fellutanum).